We begin with the raw amino-acid sequence, 78 residues long: Large ribosomal subunit protein bL28 (78 aa).

The segment at 1-21 (MSKVCQVTGKRPITGHNVSHA) is disordered.

This sequence belongs to the bacterial ribosomal protein bL28 family.

The chain is Large ribosomal subunit protein bL28 from Cellvibrio japonicus (strain Ueda107) (Pseudomonas fluorescens subsp. cellulosa).